The following is a 188-amino-acid chain: Elongation factor P (188 aa).

Lys-34 carries the N6-(3,6-diaminohexanoyl)-5-hydroxylysine modification.

This sequence belongs to the elongation factor P family. In terms of processing, may be beta-lysylated on the epsilon-amino group of Lys-34 by the combined action of EpmA and EpmB, and then hydroxylated on the C5 position of the same residue by EpmC (if this protein is present). Lysylation is critical for the stimulatory effect of EF-P on peptide-bond formation. The lysylation moiety may extend toward the peptidyltransferase center and stabilize the terminal 3-CCA end of the tRNA. Hydroxylation of the C5 position on Lys-34 may allow additional potential stabilizing hydrogen-bond interactions with the P-tRNA.

Its subcellular location is the cytoplasm. The protein operates within protein biosynthesis; polypeptide chain elongation. Involved in peptide bond synthesis. Alleviates ribosome stalling that occurs when 3 or more consecutive Pro residues or the sequence PPG is present in a protein, possibly by augmenting the peptidyl transferase activity of the ribosome. Modification of Lys-34 is required for alleviation. The sequence is that of Elongation factor P from Pseudoalteromonas translucida (strain TAC 125).